Consider the following 525-residue polypeptide: Light-independent protochlorophyllide reductase subunit B (525 aa).

Asp-36 provides a ligand contact to [4Fe-4S] cluster. The active-site Proton donor is the Asp-292. Residue Gly-428–Leu-429 participates in substrate binding. Positions Pro-447 to Glu-470 are disordered. A compositionally biased stretch (low complexity) spans Ala-460 to Glu-470.

It belongs to the ChlB/BchB/BchZ family. Protochlorophyllide reductase is composed of three subunits; BchL, BchN and BchB. Forms a heterotetramer of two BchB and two BchN subunits. [4Fe-4S] cluster serves as cofactor.

The enzyme catalyses chlorophyllide a + oxidized 2[4Fe-4S]-[ferredoxin] + 2 ADP + 2 phosphate = protochlorophyllide a + reduced 2[4Fe-4S]-[ferredoxin] + 2 ATP + 2 H2O. Its pathway is porphyrin-containing compound metabolism; bacteriochlorophyll biosynthesis (light-independent). Functionally, component of the dark-operative protochlorophyllide reductase (DPOR) that uses Mg-ATP and reduced ferredoxin to reduce ring D of protochlorophyllide (Pchlide) to form chlorophyllide a (Chlide). This reaction is light-independent. The NB-protein (BchN-BchB) is the catalytic component of the complex. This Chlorobium luteolum (strain DSM 273 / BCRC 81028 / 2530) (Pelodictyon luteolum) protein is Light-independent protochlorophyllide reductase subunit B.